Consider the following 370-residue polypeptide: Peptidyl-prolyl cis-trans isomerase D (370 aa).

Position 5 is a phosphoserine (Ser5). In terms of domain architecture, PPIase cyclophilin-type spans 19-183 (FFDVDIGGER…KLCVIAECGE (165 aa)). Lys171 is subject to N6-acetyllysine. The tract at residues 185–215 (KEGDEWGIFPKDGSGDSHPDFPEDADIDLKD) is chaperone activity. Ser198 is subject to Phosphoserine. The interval 214-370 (KDVDKILLIS…EKAVYAKMFA (157 aa)) is interaction with HSP90AB1. TPR repeat units follow at residues 223–256 (SEDL…LDSS), 273–306 (LSCV…DPSN), and 308–340 (KALY…APGD).

This sequence belongs to the cyclophilin-type PPIase family. PPIase D subfamily. Identified in ESR1 or NR3C1/GCR steroid receptor-chaperone complexes. Found in HSP90 chaperone complexes with kinase clients LCK or EIF2AK1. Two monomers associate with one HSP90 homodimer. Interacts with HSP90AA1. Interacts with HSP90AB1; PPID and FKBP4 compete for binding to HSP90AB1 and the interaction is mutually exclusive with the PPID:HSPA8 interaction. Interacts with HSPA8; PPID and STIP1 but not FKBP4 compete for binding to HSPA8 and the interaction is mutually exclusive with the PPID:HSP90AB1 interaction. Interacts with S100A1 and S100A2; the interactions dissociate the PPID:HSP90AA1 interaction. Interacts with S100A6. Interacts with MYB, ILF2, XRCC6, RACK1 and RPS3. Interacts with cytoplasmic dynein 1 intermediate chain (DYNC1I1 or DYNC1I2).

Its subcellular location is the cytoplasm. The protein localises to the nucleus. The protein resides in the nucleolus. It is found in the nucleoplasm. The catalysed reaction is [protein]-peptidylproline (omega=180) = [protein]-peptidylproline (omega=0). Less sensitive to inhibition by cyclosporin A than is CYP-18. Its function is as follows. PPIase that catalyzes the cis-trans isomerization of proline imidic peptide bonds in oligopeptides and may therefore assist protein folding. Proposed to act as a co-chaperone in HSP90 complexes such as in unligated steroid receptors heterocomplexes. Different co-chaperones seem to compete for association with HSP90 thus establishing distinct HSP90-co-chaperone-receptor complexes with the potential to exert tissue-specific receptor activity control. May have a preference for estrogen receptor complexes and is not found in glucocorticoid receptor complexes. May be involved in cytoplasmic dynein-dependent movement of the receptor from the cytoplasm to the nucleus. May regulate MYB by inhibiting its DNA-binding activity. Involved in regulation of AHR signaling by promoting the formation of the AHR:ARNT dimer; the function is independent of HSP90 but requires the chaperone activity region. Involved in regulation of UV radiation-induced apoptosis. The chain is Peptidyl-prolyl cis-trans isomerase D from Rattus norvegicus (Rat).